The chain runs to 810 residues: MPNKNDNKGKYSRLEKEAKKAREEKISIPNVLPAIAMRSNMVIFPNTVVPFYVGREISLMALEEAMEKTNQIVFVVNQKDPAVETPTEKDLYKVGTIVRIIQVGKLPDETFKVLVEGIARAKWIKNVGEKFFKFEIEILRTRYGKSKRLIALMRMVKEELHKYVQYSRKIPPETLMLLEDVDNPDVFADIAASLCPGNIEEKQQLLEIVHPANRLERILDILARETELLEIEQQLDQKVKERIEKSQREYYLREKLRVIRDELGGEEDIEIKELKEKIENNNYPEFVKEKARAEINRLEKMSPYAPEATVVRTYLDWILNLPWHEKTDDTDDINFAEKVLNEDHYGLDEPKRRILEYLATRKVSQKAKAPIICFVGPPGVGKTSLAKSIARAMNRKFGRMSLGGLRDEAEIRGHRRTYVGAMPGRIMQLIRKLGVKNPVILLDEIDKMGISFQGDPASALLEVLDPEQNKEFVDHYIELPYDLSEVLFVTTANVLYTIPPALRDRMEVIEISSYTDVEKFYIAKNYIIPKIESEFVEKADEIFSFKDTAIKKIINEYTLEPGVRELEREIRSVVRKATLDAIKTGKKIVISPEKVTEYLGPSKIKDEDKLEKPMIGVTTGLAWTPNGGTTLYIESTLIPGNGGLIITGQLGDVMKESVRIALSLARKIVGDEYAEKFTKNDIHVHVPEGAVPKDGPSAGVTITTALVSVVKNIPVRNDIAMTGEITLRGRVLPVGGIKEKVMAAYRKGIYHVILPKKNEVDIEKVPEVVRTKMKFTFVETIEEVLEVALNEDNSKESRKGRTRKGNSNTK.

In terms of domain architecture, Lon N-terminal spans 32-226 (LPAIAMRSNM…RILDILARET (195 aa)). 376–383 (GPPGVGKT) contributes to the ATP binding site. In terms of domain architecture, Lon proteolytic spans 612-791 (KPMIGVTTGL…EEVLEVALNE (180 aa)). Catalysis depends on residues Ser697 and Lys740.

Belongs to the peptidase S16 family. As to quaternary structure, homohexamer. Organized in a ring with a central cavity.

It localises to the cytoplasm. It catalyses the reaction Hydrolysis of proteins in presence of ATP.. In terms of biological role, ATP-dependent serine protease that mediates the selective degradation of mutant and abnormal proteins as well as certain short-lived regulatory proteins. Required for cellular homeostasis and for survival from DNA damage and developmental changes induced by stress. Degrades polypeptides processively to yield small peptide fragments that are 5 to 10 amino acids long. Binds to DNA in a double-stranded, site-specific manner. In Fervidobacterium nodosum (strain ATCC 35602 / DSM 5306 / Rt17-B1), this protein is Lon protease.